Reading from the N-terminus, the 505-residue chain is GMP synthase [glutamine-hydrolyzing] (505 aa).

A Glutamine amidotransferase type-1 domain is found at 3–190 (KVLVVNFGGQ…LRKIARISDV (188 aa)). C80 acts as the Nucleophile in catalysis. Residues H164 and E166 contribute to the active site. The region spanning 191-380 (WRPEDQITRI…LGLPEDVVYR (190 aa)) is the GMPS ATP-PPase domain. Residue 218-224 (SGGVDST) coordinates ATP.

It catalyses the reaction XMP + L-glutamine + ATP + H2O = GMP + L-glutamate + AMP + diphosphate + 2 H(+). Its pathway is purine metabolism; GMP biosynthesis; GMP from XMP (L-Gln route): step 1/1. Its function is as follows. Catalyzes the synthesis of GMP from XMP. The chain is GMP synthase [glutamine-hydrolyzing] from Pyrobaculum aerophilum (strain ATCC 51768 / DSM 7523 / JCM 9630 / CIP 104966 / NBRC 100827 / IM2).